The following is a 316-amino-acid chain: Methionyl-tRNA formyltransferase (316 aa).

A (6S)-5,6,7,8-tetrahydrofolate-binding site is contributed by 112–115 (SLLP).

The protein belongs to the Fmt family.

It carries out the reaction L-methionyl-tRNA(fMet) + (6R)-10-formyltetrahydrofolate = N-formyl-L-methionyl-tRNA(fMet) + (6S)-5,6,7,8-tetrahydrofolate + H(+). Attaches a formyl group to the free amino group of methionyl-tRNA(fMet). The formyl group appears to play a dual role in the initiator identity of N-formylmethionyl-tRNA by promoting its recognition by IF2 and preventing the misappropriation of this tRNA by the elongation apparatus. This Trichlorobacter lovleyi (strain ATCC BAA-1151 / DSM 17278 / SZ) (Geobacter lovleyi) protein is Methionyl-tRNA formyltransferase.